A 189-amino-acid chain; its full sequence is ATP synthase subunit b (189 aa).

A helical transmembrane segment spans residues 7–27 (LLIAALAVAPLAHAAEGGFVG).

Belongs to the ATPase B chain family. As to quaternary structure, F-type ATPases have 2 components, F(1) - the catalytic core - and F(0) - the membrane proton channel. F(1) has five subunits: alpha(3), beta(3), gamma(1), delta(1), epsilon(1). F(0) has three main subunits: a(1), b(2) and c(10-14). The alpha and beta chains form an alternating ring which encloses part of the gamma chain. F(1) is attached to F(0) by a central stalk formed by the gamma and epsilon chains, while a peripheral stalk is formed by the delta and b chains.

It is found in the cell inner membrane. In terms of biological role, f(1)F(0) ATP synthase produces ATP from ADP in the presence of a proton or sodium gradient. F-type ATPases consist of two structural domains, F(1) containing the extramembraneous catalytic core and F(0) containing the membrane proton channel, linked together by a central stalk and a peripheral stalk. During catalysis, ATP synthesis in the catalytic domain of F(1) is coupled via a rotary mechanism of the central stalk subunits to proton translocation. Functionally, component of the F(0) channel, it forms part of the peripheral stalk, linking F(1) to F(0). The chain is ATP synthase subunit b from Hyphomonas neptunium (strain ATCC 15444).